The chain runs to 65 residues: Large ribosomal subunit protein bL35 (65 aa).

The segment at methionine 1–arginine 29 is disordered.

The protein belongs to the bacterial ribosomal protein bL35 family.

The sequence is that of Large ribosomal subunit protein bL35 from Kocuria rhizophila (strain ATCC 9341 / DSM 348 / NBRC 103217 / DC2201).